We begin with the raw amino-acid sequence, 347 residues long: MTNSSRERKVRGSQIRTSRREKQDKNARNRTEKELTRLENHQTHRTKNGTSKLDERFIPEEQPFIETEAVTQVETRMRRWLDVGRPVHLIGPTGCGKTALAMHVARERDRPVVWINGDADLTTSDLVGEYAEKERISERDKYVHNVVKSKDIVRDRWVDNPLTLAVREGATLVYNEFSRTKPVANNVLLSVFEEGVLELPGQRGKSRYVDVHPDFRAILTSNSVEYAGVHEPQDALLDRLVGLYLDFYDRETEVEIVRAHVDDFDTEDTEQIVRLMRELRERLDVNVGTRAAIMAAEGLTTVDDLDRSILTDICVDVLASKVAQHSDVHELRDEVEATIKGMEGTLS.

A disordered region spans residues 1–50; that stretch reads MTNSSRERKVRGSQIRTSRREKQDKNARNRTEKELTRLENHQTHRTKNGT. Positions 18-42 are enriched in basic and acidic residues; sequence SRREKQDKNARNRTEKELTRLENHQ. ATP is bound at residue 91-98; sequence GPTGCGKT.

This sequence belongs to the CbbQ/NirQ/NorQ/GpvN family. In terms of assembly, forms homodimers, a GvpN-GvpO heterodimer, interacts with GvpC and GvpL, might interact with GvpA.

Its subcellular location is the gas vesicle. The protein localises to the cytoplasm. The catalysed reaction is ATP + H2O = ADP + phosphate + H(+). In terms of biological role, an ATPase that functions in gas vesicle formation. A minor component of the gas vesicle, also found in soluble extracts. Gas vesicles are hollow, gas filled proteinaceous nanostructures found in some microorganisms. They allow positioning of halobacteria at the optimal depth for growth in the poorly aerated, shallow brine pools of their habitat. Its function is as follows. Expression of a 9.5 kb mc-vac DNA fragment containing 2 divergently transcribed regions (gvpD-gvpE-gvpF-gvpG-gvpH-gvpI-gvpJ-gvpK-gvpL-gvpM and gvpA-gvpC-gvpN-gvpO) allows H.volcanii to produce gas vesicles. This chain is Gas vesicle ATPase GvpN, found in Haloferax mediterranei (strain ATCC 33500 / DSM 1411 / JCM 8866 / NBRC 14739 / NCIMB 2177 / R-4) (Halobacterium mediterranei).